We begin with the raw amino-acid sequence, 130 residues long: Small ribosomal subunit protein uS8 (130 aa).

Belongs to the universal ribosomal protein uS8 family. As to quaternary structure, part of the 30S ribosomal subunit. Contacts proteins S5 and S12.

Functionally, one of the primary rRNA binding proteins, it binds directly to 16S rRNA central domain where it helps coordinate assembly of the platform of the 30S subunit. The polypeptide is Small ribosomal subunit protein uS8 (Buchnera aphidicola subsp. Schizaphis graminum (strain Sg)).